The following is a 373-amino-acid chain: tRNA N6-adenosine threonylcarbamoyltransferase (373 aa).

A divalent metal cation is bound by residues histidine 133, histidine 137, and tyrosine 154. Residues 154-158, aspartate 186, glycine 201, glutamate 205, and asparagine 302 each bind substrate; that span reads YVSGG. Aspartate 331 serves as a coordination point for a divalent metal cation.

Belongs to the KAE1 / TsaD family. Component of the EKC/KEOPS complex composed of at least BUD32, CGI121, GON7, KAE1 and PCC1; the whole complex dimerizes. The cofactor is a divalent metal cation.

It is found in the cytoplasm. The protein resides in the nucleus. It carries out the reaction L-threonylcarbamoyladenylate + adenosine(37) in tRNA = N(6)-L-threonylcarbamoyladenosine(37) in tRNA + AMP + H(+). Functionally, component of the EKC/KEOPS complex that is required for the formation of a threonylcarbamoyl group on adenosine at position 37 (t(6)A37) in tRNAs that read codons beginning with adenine. The complex is probably involved in the transfer of the threonylcarbamoyl moiety of threonylcarbamoyl-AMP (TC-AMP) to the N6 group of A37. KAE1 likely plays a direct catalytic role in this reaction, but requires other protein(s) of the complex to fulfill this activity. The EKC/KEOPS complex also promotes both telomere uncapping and telomere elongation. The complex is required for efficient recruitment of transcriptional coactivators. In Debaryomyces hansenii (strain ATCC 36239 / CBS 767 / BCRC 21394 / JCM 1990 / NBRC 0083 / IGC 2968) (Yeast), this protein is tRNA N6-adenosine threonylcarbamoyltransferase.